Consider the following 260-residue polypeptide: MSFTVLIPARLASSRLPNKPLADINGVPMVVRVAQRALQSSALRTVVAADGTEIIEKCAAFGIQTVLTRVDHPSGSDRLAEACGLLGLLDDDIVVNVQGDEPLINPALIDAVARQLEARPDCAMSTAAHSIDELADFLNPNVVKVVLDARQTALYFSRAPIPAARDLAGQAWWKHGNLPKPLRHVGIYAYRVGFLRQFPQLPQAPLEQLESLEQLRALWHGYRIAVHITEHAPGPGVDTPEDLERVRRLVANDAHLADPV.

The protein belongs to the KdsB family.

It localises to the cytoplasm. The enzyme catalyses 3-deoxy-alpha-D-manno-oct-2-ulosonate + CTP = CMP-3-deoxy-beta-D-manno-octulosonate + diphosphate. It functions in the pathway nucleotide-sugar biosynthesis; CMP-3-deoxy-D-manno-octulosonate biosynthesis; CMP-3-deoxy-D-manno-octulosonate from 3-deoxy-D-manno-octulosonate and CTP: step 1/1. The protein operates within bacterial outer membrane biogenesis; lipopolysaccharide biosynthesis. In terms of biological role, activates KDO (a required 8-carbon sugar) for incorporation into bacterial lipopolysaccharide in Gram-negative bacteria. In Polaromonas naphthalenivorans (strain CJ2), this protein is 3-deoxy-manno-octulosonate cytidylyltransferase.